The sequence spans 466 residues: Asparagine--tRNA ligase (466 aa).

It belongs to the class-II aminoacyl-tRNA synthetase family. Homodimer.

Its subcellular location is the cytoplasm. It carries out the reaction tRNA(Asn) + L-asparagine + ATP = L-asparaginyl-tRNA(Asn) + AMP + diphosphate + H(+). This Shigella dysenteriae serotype 1 (strain Sd197) protein is Asparagine--tRNA ligase.